Reading from the N-terminus, the 286-residue chain is Ribonuclease H1 (286 aa).

Positions 101 to 115 (EPLDGDGHESAEPYA) are enriched in basic and acidic residues. A disordered region spans residues 101 to 127 (EPLDGDGHESAEPYAKHMKPSVEPAPP). The region spanning 136 to 282 (MGDFVVVYTD…ADRLAREGAK (147 aa)) is the RNase H type-1 domain. Mg(2+) is bound by residues aspartate 145, glutamate 186, aspartate 210, and aspartate 274.

Belongs to the RNase H family. Monomer. It depends on Mg(2+) as a cofactor. Ubiquitous.

It localises to the cytoplasm. The catalysed reaction is Endonucleolytic cleavage to 5'-phosphomonoester.. In the presence of magnesium, manganese is inhibitory. Endonuclease that specifically degrades the RNA of RNA-DNA hybrids. Plays a role in RNA polymerase II (RNAp II) transcription termination by degrading R-loop RNA-DNA hybrid formation at G-rich pause sites located downstream of the poly(A) site and behind the elongating RNAp II. The sequence is that of Ribonuclease H1 (RNASEH1) from Homo sapiens (Human).